A 277-amino-acid polypeptide reads, in one-letter code: Large ribosomal subunit protein uL2 (277 aa).

The tract at residues 223-261 (SVMNPNDHPHGGGEGKSPVGRPSPVTPWGKPALGYKTRK) is disordered.

The protein belongs to the universal ribosomal protein uL2 family. As to quaternary structure, part of the 50S ribosomal subunit. Forms a bridge to the 30S subunit in the 70S ribosome.

One of the primary rRNA binding proteins. Required for association of the 30S and 50S subunits to form the 70S ribosome, for tRNA binding and peptide bond formation. It has been suggested to have peptidyltransferase activity; this is somewhat controversial. Makes several contacts with the 16S rRNA in the 70S ribosome. This is Large ribosomal subunit protein uL2 from Clostridium botulinum (strain Alaska E43 / Type E3).